A 209-amino-acid chain; its full sequence is Small ribosomal subunit protein uS4 (209 aa).

One can recognise an S4 RNA-binding domain in the interval 98–166 (RRLDNVVYRL…IKQAIELNKG (69 aa)).

This sequence belongs to the universal ribosomal protein uS4 family. In terms of assembly, part of the 30S ribosomal subunit. Contacts protein S5. The interaction surface between S4 and S5 is involved in control of translational fidelity.

Functionally, one of the primary rRNA binding proteins, it binds directly to 16S rRNA where it nucleates assembly of the body of the 30S subunit. Its function is as follows. With S5 and S12 plays an important role in translational accuracy. This is Small ribosomal subunit protein uS4 from Fervidobacterium nodosum (strain ATCC 35602 / DSM 5306 / Rt17-B1).